A 493-amino-acid polypeptide reads, in one-letter code: Endoglucanase 23 (493 aa).

The first 23 residues, 1–23 (MKASIYLVTVFILLLLLLPTAIP), serve as a signal peptide directing secretion. The active-site Nucleophile is Asp78. N-linked (GlcNAc...) asparagine glycosylation is present at Asn297. The active site involves His410. N-linked (GlcNAc...) asparagine glycosylation occurs at Asn465. Glu470 is a catalytic residue.

Belongs to the glycosyl hydrolase 9 (cellulase E) family.

The protein resides in the secreted. The enzyme catalyses Endohydrolysis of (1-&gt;4)-beta-D-glucosidic linkages in cellulose, lichenin and cereal beta-D-glucans.. The polypeptide is Endoglucanase 23 (Arabidopsis thaliana (Mouse-ear cress)).